Reading from the N-terminus, the 499-residue chain is MVLLYSQASWDQRSKADALVLPFWMKNSKAQEAAVVDEDYKLVYQNALSNFSGKKGETAFLFGNDHTKEQKIVLLGLGKSEEVSGTTVLEAYAQATTVLRKAKCKTVNILFPTISQLRFSVEEFLTNLAAGVLSLNYNYPTYHKVDTSLPFLEKVTVMGIVSKVGDKIFRKEESLFEGVYLTRDLVNTNADEVTPEKLAAVAKGLAGEFASLDVKILDRKAILKEKMGLLAAVAKGAAVEPRFIVLDYQGKPKSKDRTVLIGKGVTFDSGGLDLKPGKAMITMKEDMAGAATVLGIFSALASLELPINVTGIIPATENAIGSAAYKMGDVYVGMTGLSVEIGSTDAEGRLILADAISYALKYCNPTRIIDFATLTGAMVVSLGESVAGFFANNDVLARDLAEASSETGEALWRMPLVEKYDQALHSDIADMKNIGSNRAGSITAALFLQRFLEDNPVAWAHLDIAGTAYHEKEELPYPKYATGFGVRCLIHYMEKFLSK.

Positions 263 and 268 each coordinate Mn(2+). Lys275 is a catalytic residue. 3 residues coordinate Mn(2+): Asp286, Asp345, and Glu347. Arg349 is a catalytic residue.

This sequence belongs to the peptidase M17 family. It depends on Mn(2+) as a cofactor.

The protein resides in the cytoplasm. The enzyme catalyses Release of an N-terminal amino acid, Xaa-|-Yaa-, in which Xaa is preferably Leu, but may be other amino acids including Pro although not Arg or Lys, and Yaa may be Pro. Amino acid amides and methyl esters are also readily hydrolyzed, but rates on arylamides are exceedingly low.. The catalysed reaction is Release of an N-terminal amino acid, preferentially leucine, but not glutamic or aspartic acids.. In terms of biological role, presumably involved in the processing and regular turnover of intracellular proteins. Catalyzes the removal of unsubstituted N-terminal amino acids from various peptides. The sequence is that of Probable cytosol aminopeptidase from Chlamydia trachomatis serovar L2 (strain ATCC VR-902B / DSM 19102 / 434/Bu).